The following is a 538-amino-acid chain: Transmembrane protein 266 (538 aa).

The Cytoplasmic segment spans residues M1–S102. Residues F103–T123 traverse the membrane as a helical segment. The Extracellular segment spans residues K124–N130. The helical transmembrane segment at A131–S151 threads the bilayer. The Cytoplasmic portion of the chain corresponds to E152–K169. Residues I170–V190 form a helical membrane-spanning segment. Residues A191 to D199 are Extracellular-facing. A helical transmembrane segment spans residues A200–V220. Residues L221 to A538 are Cytoplasmic-facing. A coiled-coil region spans residues Q232–E278. Disordered stretches follow at residues N380–L435 and S453–S483. Positions S381–C396 are enriched in low complexity. Over residues G397–S417 the composition is skewed to polar residues. Residues P425 to P434 are compositionally biased toward low complexity.

In terms of assembly, homodimer; disulfide-linked. As to expression, in brain, present in the granule layer of the cerebellar cortex. Localizes on the post-synaptic side of glutamatergic mossy fibers and granule cells in the cerebellum (at protein level). Predominantly expressed in granule cells in cerebellum (at protein level).

The protein resides in the cell projection. Its subcellular location is the dendrite. The protein localises to the perikaryon. It is found in the cell membrane. Functionally, voltage-sensor protein present on the post-synaptic side of glutamatergic mossy fibers and granule cells in the cerebellum. Despite the presence of a voltage-sensor segment, does not form a functional ion channel and its precise role remains unclear. Undergoes both rapid and slow structural rearrangements in response to changes in voltage. Contains a zinc-binding site that can regulate the slow conformational transition. This chain is Transmembrane protein 266, found in Mus musculus (Mouse).